Reading from the N-terminus, the 86-residue chain is Omega-theraphotoxin-Hhn1e (86 aa).

Positions 1 to 21 (MKSIVFVALFGLALLAVVCSA) are cleaved as a signal peptide. Positions 22-50 (SEGAHKELLKEVVRAMVVDKTDAVQAEER) are excised as a propeptide. Disulfide bonds link cysteine 52/cysteine 66 and cysteine 65/cysteine 78.

Belongs to the neurotoxin 10 (Hwtx-1) family. 17 (Hntx-9) subfamily. In terms of tissue distribution, expressed by the venom gland.

Its subcellular location is the secreted. Its function is as follows. Ion channel inhibitor. This is Omega-theraphotoxin-Hhn1e from Cyriopagopus hainanus (Chinese bird spider).